Here is a 299-residue protein sequence, read N- to C-terminus: ATP phosphoribosyltransferase (299 aa).

The protein belongs to the ATP phosphoribosyltransferase family. Long subfamily. It depends on Mg(2+) as a cofactor.

The protein localises to the cytoplasm. It carries out the reaction 1-(5-phospho-beta-D-ribosyl)-ATP + diphosphate = 5-phospho-alpha-D-ribose 1-diphosphate + ATP. It participates in amino-acid biosynthesis; L-histidine biosynthesis; L-histidine from 5-phospho-alpha-D-ribose 1-diphosphate: step 1/9. Feedback inhibited by histidine. Functionally, catalyzes the condensation of ATP and 5-phosphoribose 1-diphosphate to form N'-(5'-phosphoribosyl)-ATP (PR-ATP). Has a crucial role in the pathway because the rate of histidine biosynthesis seems to be controlled primarily by regulation of HisG enzymatic activity. This is ATP phosphoribosyltransferase from Actinobacillus pleuropneumoniae serotype 7 (strain AP76).